The chain runs to 849 residues: MQICKKNVFLLYYGVLVFLSFQVSSSTDTISTNQPLSGFETIVSSGDIFELGLFTPTPDTYDHRNYYIGMWYRHVSPQTIVWVANRESPLGGDASTYLLKILDGNLILHDNISATRKSHTEGTSRRSPQKISEGNLLFHETVWSTGVNSSMSKDVQAVLFDSGNLVLRDGPNSSAAVLWQSFDHPSDTWLPGGKIRLGSQLFTSWESLIDPSPGRYSLEFDPKLHSLVTVWNRSKSYWSSGPLYDWLQSFKGFPELQGTKLSFTLNMDESYITFSVDPQSRYRLVMGVSGQFMLQVWHVDLQSWRVILSQPDNRCDVYNSCGSFGICNENREPPPCRCVPGFKREFSQGSDDSNDYSGGCKRETYLHCYKRNDEFLPIENMKLATDPTTASVLTSGTFRTCASRCVADCSCQAYANDGNKCLVWTKDAFNLQQLDANKGHTFFLRLASSNISTANNRKTEHSKGKSIVLPLVLASLVATAACFVGLYCCISSRIRRKKKQRDEKHSRELLEGGLIDDAGENMCYLNLHDIMVATNSFSRKKKLGEGGFGPVYKGKLPNGMEVAIKRLSKKSSQGLTEFKNEVVLIIKLQHKNLVRLLGYCVEGDEKLLIYEYMSNKSLDGLLFDSLKSRELDWETRMKIVNGTTRGLQYLHEYSRLRIIHRDLKASNILLDDEMNPKISDFGTARIFGCKQIDDSTQRIVGTFGYMSPEYALGGVISEKSDIYSFGVLLLEIISGKKATRFVHNDQKHSLIAYEWESWCETKGVSIIDEPMCCSYSLEEAMRCIHIALLCVQDHPKDRPMISQIVYMLSNDNTLPIPKQPTFSNVLNGDQQLDYVFSINEATQTELEAR.

Positions 1 to 26 (MQICKKNVFLLYYGVLVFLSFQVSSS) are cleaved as a signal peptide. The Bulb-type lectin domain maps to 27-180 (TDTISTNQPL…PNSSAAVLWQ (154 aa)). The Extracellular portion of the chain corresponds to 27–466 (TDTISTNQPL…RKTEHSKGKS (440 aa)). Asn111, Asn148, Asn172, and Asn232 each carry an N-linked (GlcNAc...) asparagine glycan. The region spanning 311-348 (PDNRCDVYNSCGSFGICNENREPPPCRCVPGFKREFSQ) is the EGF-like domain. Cystine bridges form between Cys315/Cys327, Cys321/Cys336, Cys401/Cys421, and Cys405/Cys411. Residues 368 to 447 (CYKRNDEFLP…KGHTFFLRLA (80 aa)) form the PAN domain. N-linked (GlcNAc...) asparagine glycosylation occurs at Asn450. Residues 467–487 (IVLPLVLASLVATAACFVGLY) traverse the membrane as a helical segment. The Cytoplasmic segment spans residues 488 to 849 (CCISSRIRRK…EATQTELEAR (362 aa)). In terms of domain architecture, Protein kinase spans 537 to 822 (FSRKKKLGEG…TLPIPKQPTF (286 aa)). Residues 543–551 (LGEGGFGPV) and Lys565 contribute to the ATP site. Ser571 carries the post-translational modification Phosphoserine. The segment at 626 to 643 (LKSRELDWETRMKIVNGT) is caM-binding. Asp662 functions as the Proton acceptor in the catalytic mechanism. Phosphoserine is present on residues Ser666 and Ser679. Residue Thr696 is modified to Phosphothreonine. Ser837 carries the post-translational modification Phosphoserine. A Phosphothreonine modification is found at Thr844.

The protein belongs to the protein kinase superfamily. Ser/Thr protein kinase family.

It localises to the cell membrane. The enzyme catalyses L-seryl-[protein] + ATP = O-phospho-L-seryl-[protein] + ADP + H(+). It carries out the reaction L-threonyl-[protein] + ATP = O-phospho-L-threonyl-[protein] + ADP + H(+). This is G-type lectin S-receptor-like serine/threonine-protein kinase At4g11900 from Arabidopsis thaliana (Mouse-ear cress).